A 671-amino-acid polypeptide reads, in one-letter code: DNA ligase (671 aa).

NAD(+) is bound by residues 32–36, 81–82, and E113; these read DAEYD and SL. Catalysis depends on K115, which acts as the N6-AMP-lysine intermediate. The NAD(+) site is built by R136, E173, K290, and K314. Residues C408, C411, C426, and C432 each contribute to the Zn(2+) site. The BRCT domain maps to 593–671; sequence EIDSPFAGKT…EAEMLRLLGS (79 aa).

The protein belongs to the NAD-dependent DNA ligase family. LigA subfamily. The cofactor is Mg(2+). Requires Mn(2+) as cofactor.

The enzyme catalyses NAD(+) + (deoxyribonucleotide)n-3'-hydroxyl + 5'-phospho-(deoxyribonucleotide)m = (deoxyribonucleotide)n+m + AMP + beta-nicotinamide D-nucleotide.. Its function is as follows. DNA ligase that catalyzes the formation of phosphodiester linkages between 5'-phosphoryl and 3'-hydroxyl groups in double-stranded DNA using NAD as a coenzyme and as the energy source for the reaction. It is essential for DNA replication and repair of damaged DNA. This is DNA ligase from Escherichia coli O9:H4 (strain HS).